Here is a 636-residue protein sequence, read N- to C-terminus: Putative cysteine-rich receptor-like protein kinase 33 (636 aa).

The signal sequence occupies residues 1 to 25 (MRKTKKISFLIFWVVLISIIGAISS). 2 Gnk2-homologous domains span residues 26-128 (QQCN…NSSF) and 138-245 (YMEH…LYPF). Topologically, residues 26–266 (QQCNETGYFE…PGSKRNISVG (241 aa)) are extracellular. N-linked (GlcNAc...) asparagine glycans are attached at residues Asn-29, Asn-63, Asn-105, Asn-125, Asn-149, Asn-173, Asn-185, Asn-188, Asn-250, and Asn-262. Residues 267 to 287 (FFVAIVVATGVVISVLSTLVV) form a helical membrane-spanning segment. At 288 to 636 (VLVCRKRKTD…DSLIDDLVPR (349 aa)) the chain is on the cytoplasmic side. Residues 321-600 (FSKCNMLGQG…MMLTSNSITL (280 aa)) form the Protein kinase domain. Residues 327–335 (LGQGGFGEV) and Lys-349 contribute to the ATP site. Tyr-394 bears the Phosphotyrosine mark. Asp-446 serves as the catalytic Proton acceptor. Ser-450 bears the Phosphoserine mark. Thr-486 carries the phosphothreonine modification. Phosphotyrosine is present on Tyr-494.

The protein belongs to the protein kinase superfamily. Ser/Thr protein kinase family. CRK subfamily.

Its subcellular location is the membrane. It catalyses the reaction L-seryl-[protein] + ATP = O-phospho-L-seryl-[protein] + ADP + H(+). The catalysed reaction is L-threonyl-[protein] + ATP = O-phospho-L-threonyl-[protein] + ADP + H(+). This Arabidopsis thaliana (Mouse-ear cress) protein is Putative cysteine-rich receptor-like protein kinase 33 (CRK33).